The chain runs to 311 residues: Class E basic helix-loop-helix protein 22 (311 aa).

Residues 22–170 (AKRMESAFRS…GGSKKSKEQK (149 aa)) form a disordered region. Low complexity predominate over residues 81–96 (GESASRSSVAESSGGE). Gly residues predominate over residues 125–147 (AGGGGGGGGGGGGGPGGGGGGGL). One can recognise a bHLH domain in the interval 171–225 (ALRLNINARERRRMHDLNDALDELRAVIPYAHSPSVRKLSKIATLLLAKNYILMQ).

It is found in the nucleus. Functionally, may act as a transcriptional repressor. The polypeptide is Class E basic helix-loop-helix protein 22 (BHLHE22) (Gallus gallus (Chicken)).